The following is a 726-amino-acid chain: F-box protein COS111 (726 aa).

The region spanning 143 to 194 (FADINCLPEEIICRIIANLNDADSQRNCLLVSQEWSECAKRIIYKDVKFTST) is the F-box domain. A disordered region spans residues 276-295 (RSRTRRSSDASSMNSSVFSH). Residues 284 to 295 (DASSMNSSVFSH) are compositionally biased toward low complexity.

Its function is as follows. F-box protein probably involved in ubiquitin conjugation pathway. This chain is F-box protein COS111 (COS111), found in Kluyveromyces lactis (strain ATCC 8585 / CBS 2359 / DSM 70799 / NBRC 1267 / NRRL Y-1140 / WM37) (Yeast).